The chain runs to 111 residues: Small ubiquitin-related modifier 3 (111 aa).

A Ubiquitin-like domain is found at 16-93 (AHVILKVKSQ…IDACRAMSGG (78 aa)). A Glycyl lysine isopeptide (Gly-Lys) (interchain with K-? in acceptor proteins) cross-link involves residue G93.

Belongs to the ubiquitin family. SUMO subfamily. Interacts with SAE2, SCE1, SIZ1 and MMS21. Covalently attached to a number of proteins. Interacts with NPR1; this interaction promotes NPR1 phosphorylation and triggers its sumoylation and subsequent degradation.

It is found in the nucleus. Its subcellular location is the cytoplasm. Its function is as follows. Ubiquitin-like protein which can be covalently attached to target lysines as a monomer. Does not seem to be involved in protein degradation and may function as an antagonist of ubiquitin in the degradation process. Promotes NPR1 sumoylation to activate defense gene expression and regulate its degradation. The protein is Small ubiquitin-related modifier 3 of Arabidopsis thaliana (Mouse-ear cress).